A 76-amino-acid chain; its full sequence is Lividin-2 (76 aa).

Positions 1–22 (MFTLKKSLLLLFFLGTISLSLC) are cleaved as a signal peptide. A propeptide spanning residues 23-41 (QEERNADEEDGGEVTEEEV) is cleaved from the precursor. A disulfide bridge connects residues Cys-70 and Cys-76.

Expressed by the skin glands.

It is found in the secreted. Functionally, antimicrobial peptide. This chain is Lividin-2, found in Odorrana livida (Green mountain frog).